The following is a 344-amino-acid chain: Beta-hexosaminidase (344 aa).

Substrate-binding positions include aspartate 60, arginine 68, arginine 132, and 162–163; that span reads KH. The active-site Proton donor/acceptor is the histidine 175. The active-site Nucleophile is aspartate 247.

Belongs to the glycosyl hydrolase 3 family. NagZ subfamily.

It localises to the cytoplasm. It carries out the reaction Hydrolysis of terminal non-reducing N-acetyl-D-hexosamine residues in N-acetyl-beta-D-hexosaminides.. It functions in the pathway cell wall biogenesis; peptidoglycan recycling. Its function is as follows. Plays a role in peptidoglycan recycling by cleaving the terminal beta-1,4-linked N-acetylglucosamine (GlcNAc) from peptide-linked peptidoglycan fragments, giving rise to free GlcNAc, anhydro-N-acetylmuramic acid and anhydro-N-acetylmuramic acid-linked peptides. This chain is Beta-hexosaminidase, found in Haemophilus ducreyi (strain 35000HP / ATCC 700724).